The chain runs to 184 residues: Protein GrpE (184 aa).

Residues 1–12 (MADEQLNEKDLN) show a composition bias toward basic and acidic residues. The tract at residues 1 to 22 (MADEQLNEKDLNAEEAGAVDNG) is disordered.

Belongs to the GrpE family. As to quaternary structure, homodimer.

It is found in the cytoplasm. Its function is as follows. Participates actively in the response to hyperosmotic and heat shock by preventing the aggregation of stress-denatured proteins, in association with DnaK and GrpE. It is the nucleotide exchange factor for DnaK and may function as a thermosensor. Unfolded proteins bind initially to DnaJ; upon interaction with the DnaJ-bound protein, DnaK hydrolyzes its bound ATP, resulting in the formation of a stable complex. GrpE releases ADP from DnaK; ATP binding to DnaK triggers the release of the substrate protein, thus completing the reaction cycle. Several rounds of ATP-dependent interactions between DnaJ, DnaK and GrpE are required for fully efficient folding. This is Protein GrpE from Pseudomonas putida (strain W619).